Reading from the N-terminus, the 35-residue chain is Cycloamanide F proprotein (35 aa).

Residues 1–10 (MSDINATRLP) constitute a propeptide that is removed on maturation. The cyclopeptide (Ile-Pro) cross-link spans 11-18 (IVGILGLP). Residues 19-35 (CIGDDVNSTLTHGEDLC) constitute a propeptide that is removed on maturation.

Belongs to the MSDIN fungal toxin family. Processed by the macrocyclase-peptidase enzyme POPB to yield a cyclic decapeptide. POPB first removes 10 residues from the N-terminus. Conformational trapping of the remaining peptide forces the enzyme to release this intermediate rather than proceed to macrocyclization. The enzyme rebinds the remaining peptide in a different conformation and catalyzes macrocyclization of the N-terminal 8 residues.

Functionally, cyclic octapeptide that belongs to the MSDIN-like toxin family responsible for a large number of food poisoning cases and deaths. Cycloaminide E is structurally related to other cycloamanides that are non-toxic to mammals but show immunosuppressive activity. The chain is Cycloamanide F proprotein from Amanita phalloides (Death cap).